The primary structure comprises 417 residues: Glucose-1-phosphate adenylyltransferase (417 aa).

Residues Tyr98, Gly163, 178 to 179 (EK), and Ser197 each bind alpha-D-glucose 1-phosphate.

Belongs to the bacterial/plant glucose-1-phosphate adenylyltransferase family. In terms of assembly, homotetramer.

It carries out the reaction alpha-D-glucose 1-phosphate + ATP + H(+) = ADP-alpha-D-glucose + diphosphate. Its pathway is glycan biosynthesis; glycogen biosynthesis. Involved in the biosynthesis of ADP-glucose, a building block required for the elongation reactions to produce glycogen. Catalyzes the reaction between ATP and alpha-D-glucose 1-phosphate (G1P) to produce pyrophosphate and ADP-Glc. The chain is Glucose-1-phosphate adenylyltransferase from Koribacter versatilis (strain Ellin345).